The chain runs to 991 residues: Mediator of RNA polymerase II transcription subunit 5 (991 aa).

This sequence belongs to the Mediator complex subunit 5 family. Component of the Mediator complex.

It is found in the nucleus. Its function is as follows. Component of the Mediator complex, a coactivator involved in the regulated transcription of nearly all RNA polymerase II-dependent genes. Mediator functions as a bridge to convey information from gene-specific regulatory proteins to the basal RNA polymerase II transcription machinery. Mediator is recruited to promoters by direct interactions with regulatory proteins and serves as a scaffold for the assembly of a functional preinitiation complex with RNA polymerase II and the general transcription factors. This is Mediator of RNA polymerase II transcription subunit 5 (NUT1) from Yarrowia lipolytica (strain CLIB 122 / E 150) (Yeast).